A 283-amino-acid polypeptide reads, in one-letter code: Probable endonuclease 4 (283 aa).

Zn(2+)-binding residues include His69, His109, Glu145, Asp179, His182, His216, Asp229, His231, and Glu261.

Belongs to the AP endonuclease 2 family. Zn(2+) serves as cofactor.

The catalysed reaction is Endonucleolytic cleavage to 5'-phosphooligonucleotide end-products.. Functionally, endonuclease IV plays a role in DNA repair. It cleaves phosphodiester bonds at apurinic or apyrimidinic (AP) sites, generating a 3'-hydroxyl group and a 5'-terminal sugar phosphate. This chain is Probable endonuclease 4, found in Campylobacter concisus (strain 13826).